A 462-amino-acid chain; its full sequence is Glycoprotein endo-alpha-1,2-mannosidase (462 aa).

Residues 1–9 (MAKFRRRTC) are Cytoplasmic-facing. A helical; Signal-anchor for type II membrane protein transmembrane segment spans residues 10 to 30 (IILSLFIVFIFSLMMGLKMLW). Residues 31–462 (PNAASFGPPF…YALDQQLPAS (432 aa)) lie on the Lumenal side of the membrane. The interval 60–462 (DFQRSDRIDM…YALDQQLPAS (403 aa)) is catalytic.

It belongs to the glycosyl hydrolase 99 family. In terms of processing, undergoes proteolytic cleavage in the C-terminal region. As to expression, highly expressed in the liver and kidney.

It is found in the golgi apparatus membrane. It catalyses the reaction N-{alpha-Glc-(1-&gt;3)-alpha-Man-(1-&gt;2)-alpha-Man-(1-&gt;2)-alpha-Man-(1-&gt;3)-[alpha-Man-(1-&gt;2)-alpha-Man-(1-&gt;3)-[alpha-Man-(1-&gt;2)-alpha-Man-(1-&gt;6)]-alpha-Man-(1-&gt;6)]-beta-Man-(1-&gt;4)-beta-GlcNAc-(1-&gt;4)-beta-GlcNAc}-L-asparaginyl-[protein] + H2O = alpha-D-glucosyl-(1-&gt;3)-D-mannopyranose + N(4)-{alpha-D-Man-(1-&gt;2)-alpha-D-Man-(1-&gt;3)-[alpha-D-Man-(1-&gt;2)-alpha-D-Man-(1-&gt;3)-[alpha-D-Man-(1-&gt;2)-alpha-D-Man-(1-&gt;6)]-alpha-D-Man-(1-&gt;6)]-beta-D-Man-(1-&gt;4)-beta-D-GlaNAc-(1-&gt;4)-beta-D-GlcNAc}-L-asparaginyl-[protein] (N-glucan mannose isomer 8A1,2,3B1,2). The protein is Glycoprotein endo-alpha-1,2-mannosidase (Manea) of Rattus norvegicus (Rat).